The chain runs to 441 residues: MSTKPTIAFTHLGCEKNRIDTEHIIGLLVQAGYEVDANEELADYVVVNTCSFIQAAREESVKTLVELAEANKKIVIAGCMAQHFPEELLAELPEAIALVGTGDYHKIVDVMQRVEKGDRVKEVTAEPTYIADETTPRYRTTSEGVAYVRIAEGCDYRCAFCIIPHLRGKARSRTIESIVVEAQKLADQGVKEIILISQITTNYGIDIYGQPKLADLLEALGKVDIPWIRMHYAYPTGLTPKVITAIQDTPNILPYLDLPLQHSHPEILRAMNRPWQGQVNDDIIKRIKTAMPNAVLRTSFIVGFPGETEEHHSHLVEFVKRHEFDHVGVFTFSPEEGTPAYNLPNQLPQEVMDARRQEIMEVQQSISWQQNQKLVGQLVDVLIEQENPQTGELIGRSPRFSPEVDGLIYVKGEARLGCIVPVMITDADIYDLYGCLISSAA.

The region spanning 5-116 (PTIAFTHLGC…IVDVMQRVEK (112 aa)) is the MTTase N-terminal domain. Cys-14, Cys-50, Cys-79, Cys-154, Cys-158, and Cys-161 together coordinate [4Fe-4S] cluster. Residues 140–370 (TTSEGVAYVR…EVQQSISWQQ (231 aa)) form the Radical SAM core domain. Residues 372–438 (QKLVGQLVDV…IYDLYGCLIS (67 aa)) form the TRAM domain.

It belongs to the methylthiotransferase family. RimO subfamily. [4Fe-4S] cluster is required as a cofactor.

It is found in the cytoplasm. The enzyme catalyses L-aspartate(89)-[ribosomal protein uS12]-hydrogen + (sulfur carrier)-SH + AH2 + 2 S-adenosyl-L-methionine = 3-methylsulfanyl-L-aspartate(89)-[ribosomal protein uS12]-hydrogen + (sulfur carrier)-H + 5'-deoxyadenosine + L-methionine + A + S-adenosyl-L-homocysteine + 2 H(+). Its function is as follows. Catalyzes the methylthiolation of an aspartic acid residue of ribosomal protein uS12. This is Ribosomal protein uS12 methylthiotransferase RimO from Trichodesmium erythraeum (strain IMS101).